Consider the following 133-residue polypeptide: Small ribosomal subunit protein bS18 (133 aa).

Residues 1–63 form a disordered region; the sequence is MARPDMGGPK…GDEGGGRRGF (63 aa). Residues 9–39 show a composition bias toward gly residues; the sequence is PKTGGFGGPRSGGFGGGGGGGFGGGGFGGGR. Over residues 40 to 59 the composition is skewed to basic and acidic residues; the sequence is GGDRGDRGDRDDRGGDEGGG.

It belongs to the bacterial ribosomal protein bS18 family. Part of the 30S ribosomal subunit. Forms a tight heterodimer with protein bS6.

Its function is as follows. Binds as a heterodimer with protein bS6 to the central domain of the 16S rRNA, where it helps stabilize the platform of the 30S subunit. The chain is Small ribosomal subunit protein bS18 from Anaeromyxobacter dehalogenans (strain 2CP-1 / ATCC BAA-258).